A 315-amino-acid chain; its full sequence is Serpentine receptor class delta-31 (315 aa).

7 consecutive transmembrane segments (helical) span residues L6 to I26, A38 to M58, A83 to I103, V124 to I144, I174 to I194, F225 to T245, and A256 to V276.

Belongs to the nematode receptor-like protein srd family.

The protein localises to the membrane. The polypeptide is Serpentine receptor class delta-31 (srd-31) (Caenorhabditis elegans).